A 529-amino-acid chain; its full sequence is Tyrosinase (529 aa).

The signal sequence occupies residues 1–18 (MFLFAMGLLLVILQPSTG). Residues 19-476 (QFPRVCANTQ…YLKQAHQIWP (458 aa)) are Lumenal, melanosome-facing. Residues asparagine 86, asparagine 111, and asparagine 161 are each glycosylated (N-linked (GlcNAc...) asparagine). Cu cation is bound by residues histidine 180, histidine 202, and histidine 211. N-linked (GlcNAc...) asparagine glycosylation is found at asparagine 230 and asparagine 290. The interval 293-313 (SEGPILRNPGNNDKSRTPRLP) is disordered. 2 N-linked (GlcNAc...) asparagine glycosylation sites follow: asparagine 337 and asparagine 356. Residues histidine 363 and histidine 367 each contribute to the Cu cation site. Asparagine 371 carries an N-linked (GlcNAc...) asparagine glycan. Histidine 390 is a Cu cation binding site. A helical transmembrane segment spans residues 477-497 (WLVGAAVIGGIITAVLSGLIL). The Cytoplasmic portion of the chain corresponds to 498–529 (ACRKKRKGTSPEIQPLLTESEDYNNVSYQSHF).

This sequence belongs to the tyrosinase family. Requires Cu(2+) as cofactor.

It is found in the melanosome membrane. The protein resides in the melanosome. It catalyses the reaction 2 L-dopa + O2 = 2 L-dopaquinone + 2 H2O. It carries out the reaction L-tyrosine + O2 = L-dopaquinone + H2O. In terms of biological role, this is a copper-containing oxidase that functions in the formation of pigments such as melanins and other polyphenolic compounds. Catalyzes the initial and rate limiting step in the cascade of reactions leading to melanin production from tyrosine. In addition to hydroxylating tyrosine to DOPA (3,4-dihydroxyphenylalanine), also catalyzes the oxidation of DOPA to DOPA-quinone, and possibly the oxidation of DHI (5,6-dihydroxyindole) to indole-5,6 quinone. This chain is Tyrosinase (TYR), found in Gallus gallus (Chicken).